Reading from the N-terminus, the 476-residue chain is Siroheme synthase 1 (476 aa).

The precorrin-2 dehydrogenase /sirohydrochlorin ferrochelatase stretch occupies residues methionine 1–leucine 203. NAD(+)-binding positions include glutamate 22–valine 23 and glutamine 43–serine 44. The residue at position 128 (serine 128) is a Phosphoserine. The segment at glycine 219–alanine 476 is uroporphyrinogen-III C-methyltransferase. Position 228 (proline 228) interacts with S-adenosyl-L-methionine. Residue aspartate 251 is the Proton acceptor of the active site. Catalysis depends on lysine 273, which acts as the Proton donor. Residues glycine 304–aspartate 306, isoleucine 309, threonine 334–alanine 335, methionine 386, and glycine 415 each bind S-adenosyl-L-methionine.

The protein in the N-terminal section; belongs to the precorrin-2 dehydrogenase / sirohydrochlorin ferrochelatase family. It in the C-terminal section; belongs to the precorrin methyltransferase family.

The enzyme catalyses uroporphyrinogen III + 2 S-adenosyl-L-methionine = precorrin-2 + 2 S-adenosyl-L-homocysteine + H(+). It carries out the reaction precorrin-2 + NAD(+) = sirohydrochlorin + NADH + 2 H(+). The catalysed reaction is siroheme + 2 H(+) = sirohydrochlorin + Fe(2+). It participates in cofactor biosynthesis; adenosylcobalamin biosynthesis; precorrin-2 from uroporphyrinogen III: step 1/1. It functions in the pathway cofactor biosynthesis; adenosylcobalamin biosynthesis; sirohydrochlorin from precorrin-2: step 1/1. The protein operates within porphyrin-containing compound metabolism; siroheme biosynthesis; precorrin-2 from uroporphyrinogen III: step 1/1. Its pathway is porphyrin-containing compound metabolism; siroheme biosynthesis; siroheme from sirohydrochlorin: step 1/1. It participates in porphyrin-containing compound metabolism; siroheme biosynthesis; sirohydrochlorin from precorrin-2: step 1/1. Its function is as follows. Multifunctional enzyme that catalyzes the SAM-dependent methylations of uroporphyrinogen III at position C-2 and C-7 to form precorrin-2 via precorrin-1. Then it catalyzes the NAD-dependent ring dehydrogenation of precorrin-2 to yield sirohydrochlorin. Finally, it catalyzes the ferrochelation of sirohydrochlorin to yield siroheme. The sequence is that of Siroheme synthase 1 from Serratia proteamaculans (strain 568).